A 64-amino-acid chain; its full sequence is Large ribosomal subunit protein bL28c (64 aa).

The protein belongs to the bacterial ribosomal protein bL28 family.

The protein localises to the plastid. It localises to the chloroplast. The chain is Large ribosomal subunit protein bL28c from Gracilaria tenuistipitata var. liui (Red alga).